The primary structure comprises 864 residues: Leucine--tRNA ligase (864 aa).

The short motif at Pro42–His52 is the 'HIGH' region element. The 'KMSKS' region signature appears at Lys621–Ser625. Residue Lys624 participates in ATP binding.

The protein belongs to the class-I aminoacyl-tRNA synthetase family.

The protein resides in the cytoplasm. The catalysed reaction is tRNA(Leu) + L-leucine + ATP = L-leucyl-tRNA(Leu) + AMP + diphosphate. The sequence is that of Leucine--tRNA ligase from Alkalilimnicola ehrlichii (strain ATCC BAA-1101 / DSM 17681 / MLHE-1).